We begin with the raw amino-acid sequence, 341 residues long: Ribosomal RNA small subunit methyltransferase H (341 aa).

Residues 47-49 (GGY), Asp-64, Phe-91, Asp-109, and Gln-116 contribute to the S-adenosyl-L-methionine site.

It belongs to the methyltransferase superfamily. RsmH family.

The protein localises to the cytoplasm. The enzyme catalyses cytidine(1402) in 16S rRNA + S-adenosyl-L-methionine = N(4)-methylcytidine(1402) in 16S rRNA + S-adenosyl-L-homocysteine + H(+). Its function is as follows. Specifically methylates the N4 position of cytidine in position 1402 (C1402) of 16S rRNA. This is Ribosomal RNA small subunit methyltransferase H from Rhizobium rhizogenes (strain K84 / ATCC BAA-868) (Agrobacterium radiobacter).